The primary structure comprises 193 residues: Hypoxanthine/guanine phosphoribosyltransferase (193 aa).

It belongs to the purine/pyrimidine phosphoribosyltransferase family. Archaeal HPRT subfamily. Homodimer.

The protein resides in the cytoplasm. It carries out the reaction IMP + diphosphate = hypoxanthine + 5-phospho-alpha-D-ribose 1-diphosphate. It catalyses the reaction GMP + diphosphate = guanine + 5-phospho-alpha-D-ribose 1-diphosphate. The protein operates within purine metabolism; IMP biosynthesis via salvage pathway; IMP from hypoxanthine: step 1/1. Its function is as follows. Catalyzes a salvage reaction resulting in the formation of IMP that is energically less costly than de novo synthesis. Prefers hypoxanthine, has 66% activity with guanine while activity with adenine, xanthine, uracil, orotate, or cytosine is negligible. The sequence is that of Hypoxanthine/guanine phosphoribosyltransferase from Methanothermobacter marburgensis (strain ATCC BAA-927 / DSM 2133 / JCM 14651 / NBRC 100331 / OCM 82 / Marburg) (Methanobacterium thermoautotrophicum).